The following is a 459-amino-acid chain: Cysteine--tRNA ligase (459 aa).

Cys27 serves as a coordination point for Zn(2+). Positions 29-39 (ITVYDDCHIGH) match the 'HIGH' region motif. Zn(2+) is bound by residues Cys208, His233, and Glu237. Residues 265-269 (KMSKS) carry the 'KMSKS' region motif. Lys268 lines the ATP pocket.

This sequence belongs to the class-I aminoacyl-tRNA synthetase family. As to quaternary structure, monomer. Zn(2+) serves as cofactor.

Its subcellular location is the cytoplasm. The catalysed reaction is tRNA(Cys) + L-cysteine + ATP = L-cysteinyl-tRNA(Cys) + AMP + diphosphate. In Francisella philomiragia subsp. philomiragia (strain ATCC 25017 / CCUG 19701 / FSC 153 / O#319-036), this protein is Cysteine--tRNA ligase.